A 555-amino-acid polypeptide reads, in one-letter code: CTP synthase (555 aa).

Residues 1–271 (MVKRGKKTKY…DDKLAELFNI (271 aa)) form an amidoligase domain region. Ser19 is a CTP binding site. Ser19 lines the UTP pocket. ATP is bound by residues 20 to 25 (SLGKGL) and Asp77. Asp77 and Glu145 together coordinate Mg(2+). CTP-binding positions include 152–154 (DIE), 192–197 (KTKPTQ), and Lys228. UTP is bound by residues 192–197 (KTKPTQ) and Lys228. Residues 297 to 537 (RIGIVGKYVE…VKAALEHRDA (241 aa)) form the Glutamine amidotransferase type-1 domain. Position 358 (Gly358) interacts with L-glutamine. Catalysis depends on Cys385, which acts as the Nucleophile; for glutamine hydrolysis. L-glutamine is bound by residues 386–389 (LGLQ), Glu409, and Arg466. Active-site residues include His510 and Glu512. Positions 536–555 (DAQQRQPSAEVKKLPVGKNG) are disordered.

It belongs to the CTP synthase family. In terms of assembly, homotetramer.

The enzyme catalyses UTP + L-glutamine + ATP + H2O = CTP + L-glutamate + ADP + phosphate + 2 H(+). It catalyses the reaction L-glutamine + H2O = L-glutamate + NH4(+). It carries out the reaction UTP + NH4(+) + ATP = CTP + ADP + phosphate + 2 H(+). It functions in the pathway pyrimidine metabolism; CTP biosynthesis via de novo pathway; CTP from UDP: step 2/2. Allosterically activated by GTP, when glutamine is the substrate; GTP has no effect on the reaction when ammonia is the substrate. The allosteric effector GTP functions by stabilizing the protein conformation that binds the tetrahedral intermediate(s) formed during glutamine hydrolysis. Inhibited by the product CTP, via allosteric rather than competitive inhibition. In terms of biological role, catalyzes the ATP-dependent amination of UTP to CTP with either L-glutamine or ammonia as the source of nitrogen. Regulates intracellular CTP levels through interactions with the four ribonucleotide triphosphates. The protein is CTP synthase of Anaeromyxobacter dehalogenans (strain 2CP-C).